The following is a 417-amino-acid chain: Phosphoglycerate kinase 1 (417 aa).

N-acetylserine is present on serine 2. Serine 2 and serine 4 each carry phosphoserine. An N6-succinyllysine modification is found at lysine 6. At lysine 11 the chain carries N6-acetyllysine. (2R)-3-phosphoglycerate is bound by residues valine 23, aspartate 24, phenylalanine 25, asparagine 26, glutamine 38, and arginine 39. The mitochondrial targeting region exposed following cis-trans isomerization by PIN1 and recognized by the TOM complex for mitochondrial translocation of the protein stretch occupies residues 38–43 (QRIKAA). Residue lysine 48 is modified to N6-acetyllysine; alternate. Lysine 48 carries the post-translational modification N6-succinyllysine; alternate. Serine 62, histidine 63, glycine 65, and arginine 66 together coordinate (2R)-3-phosphoglycerate. Lysine 75 carries the post-translational modification N6-acetyllysine. The residue at position 76 (tyrosine 76) is a Phosphotyrosine. Lysine 86 and lysine 91 each carry N6-acetyllysine. The residue at position 97 (lysine 97) is an N6-acetyllysine; alternate. Lysine 97 is modified (N6-(2-hydroxyisobutyryl)lysine; alternate). (2R)-3-phosphoglycerate is bound by residues leucine 122 and arginine 123. Lysine 131 is modified (N6-acetyllysine; alternate). Lysine 131 carries the N6-malonyllysine; alternate modification. Lysine 146 bears the N6-acetyllysine mark. Positions 170 and 171 each coordinate (2R)-3-phosphoglycerate. Residue lysine 191 is modified to N6-succinyllysine. Tyrosine 196 carries the phosphotyrosine modification. At lysine 199 the chain carries N6-acetyllysine. Serine 203 bears the Phosphoserine mark. Glycine 214 is a binding site for ADP. A CDP-binding site is contributed by glycine 214. AMP-binding residues include alanine 215 and lysine 216. Alanine 215 contacts ATP. Alanine 215 contacts Mg(2+). N6-(2-hydroxyisobutyryl)lysine is present on lysine 216. Mg(2+) contacts are provided by alanine 218 and aspartate 219. Residue aspartate 219 participates in CDP binding. Lysine 220 lines the AMP pocket. An ATP-binding site is contributed by lysine 220. Residue lysine 220 is modified to N6-(2-hydroxyisobutyryl)lysine. Residue glycine 238 coordinates ADP. Glycine 238 is a CDP binding site. Glycine 239 contributes to the AMP binding site. Glycine 239 provides a ligand contact to ATP. N6-acetyllysine is present on residues lysine 267 and lysine 291. Glycine 313 contributes to the AMP binding site. Glycine 313 is an ATP binding site. The residue at position 323 (lysine 323) is an N6-(2-hydroxyisobutyryl)lysine. CDP is bound by residues glycine 338, valine 340, and phenylalanine 343. ADP is bound at residue phenylalanine 343. Glutamate 344 is an AMP binding site. ATP is bound at residue glutamate 344. Residue lysine 361 is modified to N6-acetyllysine. Positions 375 and 376 each coordinate ATP. Residue aspartate 375 coordinates Mg(2+).

This sequence belongs to the phosphoglycerate kinase family. As to quaternary structure, monomer. Interacts with kinase MAPK1/ERK2; the interaction is direct, occurs under hypoxic conditions, and promotes its interaction with PIN1. Interacts with peptidyl-prolyl cis-trans isomerase PIN1; the interaction is direct, occurs under hypoxic conditions, and targets the protein to the mitochondrion by promoting interactions with the TOM complex. Interacts with mitochondrial circRNA mcPGK1 (via its 2nd stem-loop); the interaction is direct and targets the protein to the mitochondrion by promoting interactions with the TOM complex. Interacts with pyruvate dehydrogenase kinase PDK1; the interaction is direct, occurs under hypoxic conditions and leads to PDK1-mediated inhibition of pyruvate dehydrogenase complex activity. Requires Mg(2+) as cofactor. Phosphorylated at Ser-203 by MAPK1/ERK2 under hypoxic conditions, which promotes its mitochondrial targeting.

The protein resides in the cytoplasm. It localises to the cytosol. The protein localises to the mitochondrion matrix. The catalysed reaction is (2R)-3-phosphoglycerate + ATP = (2R)-3-phospho-glyceroyl phosphate + ADP. It catalyses the reaction L-seryl-[protein] + ATP = O-phospho-L-seryl-[protein] + ADP + H(+). The protein operates within carbohydrate degradation; glycolysis; pyruvate from D-glyceraldehyde 3-phosphate: step 2/5. Catalyzes one of the two ATP producing reactions in the glycolytic pathway via the reversible conversion of 1,3-diphosphoglycerate to 3-phosphoglycerate. Both L- and D- forms of purine and pyrimidine nucleotides can be used as substrates, but the activity is much lower on pyrimidines. In addition to its role as a glycolytic enzyme, it seems that PGK-1 acts as a polymerase alpha cofactor protein (primer recognition protein). Acts as a protein kinase when localized to the mitochondrion where it phosphorylates pyruvate dehydrogenase kinase PDK1 to inhibit pyruvate dehydrogenase complex activity and suppress the formation of acetyl-coenzyme A from pyruvate, and consequently inhibit oxidative phosphorylation and promote glycolysis. May play a role in sperm motility. This is Phosphoglycerate kinase 1 (PGK1) from Macaca fascicularis (Crab-eating macaque).